Here is a 117-residue protein sequence, read N- to C-terminus: Immunoglobulin lambda variable 6-57 (117 aa).

The first 19 residues, 1–19, serve as a signal peptide directing secretion; sequence MAWAPLLLTLLAHCTGSWA. The segment at 20-44 is framework-1; the sequence is NFMLTQPHSVSESPGKTVTISCTGS. One can recognise an Ig-like domain in the interval 20 to 117; sequence NFMLTQPHSV…YYCQSYDSSN (98 aa). The cysteines at positions 41 and 110 are disulfide-linked. The interval 45–52 is complementarity-determining-1; sequence SGSIASNY. Residues 53-69 are framework-2; the sequence is VQWYQQRPGSAPTTVIY. The interval 65–97 is disordered; it reads TTVIYEDNQRPSGVPDRFSGSIDSSSNSASLTI. Residues 70-72 are complementarity-determining-2; the sequence is EDN. The interval 73–110 is framework-3; it reads QRPSGVPDRFSGSIDSSSNSASLTISGLKTEDEADYYC. The span at 83-97 shows a compositional bias: low complexity; the sequence is SGSIDSSSNSASLTI. Residues 111 to 117 form a complementarity-determining-3 region; that stretch reads QSYDSSN.

Immunoglobulins are composed of two identical heavy chains and two identical light chains; disulfide-linked.

The protein resides in the secreted. The protein localises to the cell membrane. In terms of biological role, v region of the variable domain of immunoglobulin light chains that participates in the antigen recognition. Immunoglobulins, also known as antibodies, are membrane-bound or secreted glycoproteins produced by B lymphocytes. In the recognition phase of humoral immunity, the membrane-bound immunoglobulins serve as receptors which, upon binding of a specific antigen, trigger the clonal expansion and differentiation of B lymphocytes into immunoglobulins-secreting plasma cells. Secreted immunoglobulins mediate the effector phase of humoral immunity, which results in the elimination of bound antigens. The antigen binding site is formed by the variable domain of one heavy chain, together with that of its associated light chain. Thus, each immunoglobulin has two antigen binding sites with remarkable affinity for a particular antigen. The variable domains are assembled by a process called V-(D)-J rearrangement and can then be subjected to somatic hypermutations which, after exposure to antigen and selection, allow affinity maturation for a particular antigen. The protein is Immunoglobulin lambda variable 6-57 of Homo sapiens (Human).